A 360-amino-acid polypeptide reads, in one-letter code: Phosphate acyltransferase (360 aa).

This sequence belongs to the PlsX family. In terms of assembly, homodimer. Probably interacts with PlsY.

It is found in the cytoplasm. The catalysed reaction is a fatty acyl-[ACP] + phosphate = an acyl phosphate + holo-[ACP]. It functions in the pathway lipid metabolism; phospholipid metabolism. Functionally, catalyzes the reversible formation of acyl-phosphate (acyl-PO(4)) from acyl-[acyl-carrier-protein] (acyl-ACP). This enzyme utilizes acyl-ACP as fatty acyl donor, but not acyl-CoA. The protein is Phosphate acyltransferase of Caulobacter vibrioides (strain ATCC 19089 / CIP 103742 / CB 15) (Caulobacter crescentus).